A 193-amino-acid chain; its full sequence is Proton-translocating ferredoxin:NAD(+) oxidoreductase complex subunit A (193 aa).

6 consecutive transmembrane segments (helical) span residues A11–V31, V39–V59, F62–A82, M102–L122, V134–L154, and G171–I191.

The protein belongs to the NqrDE/RnfAE family. The complex is composed of six subunits: RnfA, RnfB, RnfC, RnfD, RnfE and RnfG.

The protein resides in the cell membrane. In terms of biological role, part of a membrane-bound complex that couples electron transfer with translocation of ions across the membrane. Couples electron transfer from reduced ferredoxin to NAD(+) with translocation of H(+) out of the cell. Essential for energy conservation during autotrophic growth. Contributes to ATP synthesis during heterotrophic growth. The polypeptide is Proton-translocating ferredoxin:NAD(+) oxidoreductase complex subunit A (Clostridium ljungdahlii (strain ATCC 55383 / DSM 13528 / PETC)).